The following is a 264-amino-acid chain: 3-methyl-2-oxobutanoate hydroxymethyltransferase (264 aa).

The Mg(2+) site is built by aspartate 45 and aspartate 84. 3-methyl-2-oxobutanoate-binding positions include 45–46 (DS), aspartate 84, and lysine 112. Glutamate 114 lines the Mg(2+) pocket. The active-site Proton acceptor is the glutamate 181.

It belongs to the PanB family. As to quaternary structure, homodecamer; pentamer of dimers. Mg(2+) is required as a cofactor.

The protein localises to the cytoplasm. It carries out the reaction 3-methyl-2-oxobutanoate + (6R)-5,10-methylene-5,6,7,8-tetrahydrofolate + H2O = 2-dehydropantoate + (6S)-5,6,7,8-tetrahydrofolate. The protein operates within cofactor biosynthesis; (R)-pantothenate biosynthesis; (R)-pantoate from 3-methyl-2-oxobutanoate: step 1/2. In terms of biological role, catalyzes the reversible reaction in which hydroxymethyl group from 5,10-methylenetetrahydrofolate is transferred onto alpha-ketoisovalerate to form ketopantoate. In Escherichia coli O8 (strain IAI1), this protein is 3-methyl-2-oxobutanoate hydroxymethyltransferase.